Reading from the N-terminus, the 312-residue chain is Small ribosomal subunit protein uS2 (312 aa).

The protein belongs to the universal ribosomal protein uS2 family.

This is Small ribosomal subunit protein uS2 from Ruthia magnifica subsp. Calyptogena magnifica.